Reading from the N-terminus, the 607-residue chain is Branchpoint-bridging protein (607 aa).

Polar residues-rich tracts occupy residues M1–P15 and V35–N45. Disordered regions lie at residues M1–K92 and V134–V155. Over residues G46 to P76 the composition is skewed to basic and acidic residues. The 81-residue stretch at Y201–I281 folds into the KH domain. 2 CCHC-type zinc fingers span residues Q319–E336 and I344–D361. Disordered stretches follow at residues Q363–A390 and A407–A607. The span at P373–D389 shows a compositional bias: gly residues. A compositionally biased stretch (basic and acidic residues) spans A472 to G500. Low complexity predominate over residues S521–G533. Over residues A534–P545 the composition is skewed to gly residues. Composition is skewed to pro residues over residues A550 to P563 and A581 to A607.

It belongs to the BBP/SF1 family.

It is found in the nucleus. Functionally, necessary for the splicing of pre-mRNA. Has a role in the recognition of the branch site (5'-UACUAAC-3'), the pyrimidine tract and the 3'-splice site at the 3'-end of introns. This Neurospora crassa (strain ATCC 24698 / 74-OR23-1A / CBS 708.71 / DSM 1257 / FGSC 987) protein is Branchpoint-bridging protein (bbp-1).